The primary structure comprises 189 residues: Chitin synthase 2 (189 aa).

This sequence belongs to the chitin synthase family. Class II subfamily.

Its subcellular location is the cell membrane. The catalysed reaction is [(1-&gt;4)-N-acetyl-beta-D-glucosaminyl](n) + UDP-N-acetyl-alpha-D-glucosamine = [(1-&gt;4)-N-acetyl-beta-D-glucosaminyl](n+1) + UDP + H(+). In terms of biological role, polymerizes chitin, a structural polymer of the cell wall and septum, by transferring the sugar moiety of UDP-GlcNAc to the non-reducing end of the growing chitin polymer. The protein is Chitin synthase 2 (CHS2) of Exophiala exophialae (Black yeast-like fungus).